Reading from the N-terminus, the 124-residue chain is Phycocyanin PC645 alpha-3 subunit (124 aa).

Arginine 71 contributes to the (2R,3E)-phycocyanobilin binding site. Mesobiliverdin-binding residues include cysteine 73, tyrosine 81, and lysine 97.

The protein belongs to the phycoerythrin family. In terms of assembly, heterotetramer of 2 different alpha chains and 2 identical beta chains which form 2 alpha-beta heterodimers within the heterotetramer. Post-translationally, contains one phycocyanobilin chromophore and one mesobiliverdin chromophore with binding mediated by both the alpha and beta subunits.

It is found in the plastid. It localises to the chloroplast thylakoid membrane. Its function is as follows. Light-harvesting photosynthetic tetrapyrrole chromophore-protein from the phycobiliprotein complex. The chain is Phycocyanin PC645 alpha-3 subunit from Chroomonas sp. (strain CCMP270).